Consider the following 442-residue polypeptide: Mirror-image polydactyly gene 1 protein (442 aa).

Residues 1 to 39 (MENWSKDITHSYLEQETTGINKSTQPDEQLTMNSEKSMH) are disordered. Over residues 12–35 (YLEQETTGINKSTQPDEQLTMNSE) the composition is skewed to polar residues. Coiled coils occupy residues 107-212 (SDKE…LENI) and 253-435 (ECKM…KVGT).

In terms of tissue distribution, expressed very weakly in heart, liver, skeletal muscle, kidney, pancreas and fetal kidney. Not detected in brain, placenta and lung.

The sequence is that of Mirror-image polydactyly gene 1 protein (MIPOL1) from Homo sapiens (Human).